Reading from the N-terminus, the 301-residue chain is Probable deoxyhypusine synthase 1 (301 aa).

The Nucleophile role is filled by lysine 269.

The protein belongs to the deoxyhypusine synthase family. NAD(+) serves as cofactor.

The catalysed reaction is [eIF5A protein]-L-lysine + spermidine = [eIF5A protein]-deoxyhypusine + propane-1,3-diamine. Its pathway is protein modification; eIF5A hypusination. Its function is as follows. Catalyzes the NAD-dependent oxidative cleavage of spermidine and the subsequent transfer of the butylamine moiety of spermidine to the epsilon-amino group of a specific lysine residue of the eIF-5A precursor protein to form the intermediate deoxyhypusine residue. This is Probable deoxyhypusine synthase 1 (dys1) from Archaeoglobus fulgidus (strain ATCC 49558 / DSM 4304 / JCM 9628 / NBRC 100126 / VC-16).